We begin with the raw amino-acid sequence, 978 residues long: Chaperone protein ClpB2, chloroplastic (978 aa).

The N-terminal 76 residues, 1–76 (MAAAPPLAAG…RMPPRTLSVR (76 aa)), are a transit peptide targeting the chloroplast. A Clp R domain is found at 85-229 (TQQEFTEMAW…KTAIESIRGK (145 aa)). Repeat regions lie at residues 89–154 (FTEM…IQRQ) and 166–229 (LGRD…IRGK). The tract at residues 244 to 492 (LDKYGKDLTA…KLKMEITSKP (249 aa)) is i. Residues 289-296 (GEPGVGKT) and 692-699 (GPTGVGKT) each bind ATP. The interval 618-809 (VTQDDIAEIV…IIIMTSNVGS (192 aa)) is II.

It belongs to the ClpA/ClpB family.

The protein resides in the plastid. Its subcellular location is the chloroplast. In terms of biological role, molecular chaperone that may play a role in chloroplast development. The polypeptide is Chaperone protein ClpB2, chloroplastic (CLPB2) (Oryza sativa subsp. japonica (Rice)).